A 692-amino-acid polypeptide reads, in one-letter code: Elongation factor G (692 aa).

The tr-type G domain maps to 8–283; the sequence is DKYRNIGIMA…AVVDYMPSPL (276 aa). Residues 17–24, 81–85, and 135–138 contribute to the GTP site; these read AHIDAGKT, DTPGH, and NKMD.

Belongs to the TRAFAC class translation factor GTPase superfamily. Classic translation factor GTPase family. EF-G/EF-2 subfamily.

The protein resides in the cytoplasm. In terms of biological role, catalyzes the GTP-dependent ribosomal translocation step during translation elongation. During this step, the ribosome changes from the pre-translocational (PRE) to the post-translocational (POST) state as the newly formed A-site-bound peptidyl-tRNA and P-site-bound deacylated tRNA move to the P and E sites, respectively. Catalyzes the coordinated movement of the two tRNA molecules, the mRNA and conformational changes in the ribosome. This chain is Elongation factor G, found in Trichlorobacter lovleyi (strain ATCC BAA-1151 / DSM 17278 / SZ) (Geobacter lovleyi).